Here is a 126-residue protein sequence, read N- to C-terminus: Profilin-1 (126 aa).

The protein belongs to the profilin family. Occurs in many kinds of cells as a complex with monomeric actin in a 1:1 ratio.

It is found in the cytoplasm. It localises to the cytoskeleton. Its function is as follows. Binds to actin and affects the structure of the cytoskeleton. At high concentrations, profilin prevents the polymerization of actin, whereas it enhances it at low concentrations. By binding to PIP2, it inhibits the formation of IP3 and DG. The chain is Profilin-1 (proA) from Dictyostelium discoideum (Social amoeba).